Here is a 158-residue protein sequence, read N- to C-terminus: Transcriptional repressor NrdR (158 aa).

A disordered region spans residues 1–20 (MRCPYCQSEDTQVKDSRPAE). The segment at 3–34 (CPYCQSEDTQVKDSRPAEDGAVIRRRRVCSVC) is a zinc-finger region. Basic and acidic residues predominate over residues 11 to 20 (TQVKDSRPAE). An ATP-cone domain is found at 49–139 (LMVVKKSGRR…VYRNFSKAVD (91 aa)).

It belongs to the NrdR family. Zn(2+) serves as cofactor.

Functionally, negatively regulates transcription of bacterial ribonucleotide reductase nrd genes and operons by binding to NrdR-boxes. In Brucella anthropi (strain ATCC 49188 / DSM 6882 / CCUG 24695 / JCM 21032 / LMG 3331 / NBRC 15819 / NCTC 12168 / Alc 37) (Ochrobactrum anthropi), this protein is Transcriptional repressor NrdR.